The chain runs to 163 residues: CDP-archaeol synthase (163 aa).

Transmembrane regions (helical) follow at residues 4 to 24, 52 to 72, 75 to 95, 107 to 127, and 128 to 148; these read LLLG…APFI, LLLS…FLGI, IIIG…GAFI, APIL…ISFN, and VNLN…LHMF.

The protein belongs to the CDP-archaeol synthase family. The cofactor is Mg(2+).

The protein localises to the cell membrane. The enzyme catalyses 2,3-bis-O-(geranylgeranyl)-sn-glycerol 1-phosphate + CTP + H(+) = CDP-2,3-bis-O-(geranylgeranyl)-sn-glycerol + diphosphate. The protein operates within membrane lipid metabolism; glycerophospholipid metabolism. Its function is as follows. Catalyzes the formation of CDP-2,3-bis-(O-geranylgeranyl)-sn-glycerol (CDP-archaeol) from 2,3-bis-(O-geranylgeranyl)-sn-glycerol 1-phosphate (DGGGP) and CTP. This reaction is the third ether-bond-formation step in the biosynthesis of archaeal membrane lipids. In Sulfolobus acidocaldarius (strain ATCC 33909 / DSM 639 / JCM 8929 / NBRC 15157 / NCIMB 11770), this protein is CDP-archaeol synthase.